We begin with the raw amino-acid sequence, 413 residues long: Tyrosine--tRNA ligase (413 aa).

The short motif at 59-68 (PTAPDIHLGH) is the 'HIGH' region element. The 'KMSKS' region signature appears at 243-247 (KMSKS). K246 contributes to the ATP binding site. An S4 RNA-binding domain is found at 351–411 (LAIGQLLKQA…GKRRFARVTL (61 aa)).

The protein belongs to the class-I aminoacyl-tRNA synthetase family. TyrS type 2 subfamily. As to quaternary structure, homodimer.

It is found in the cytoplasm. It carries out the reaction tRNA(Tyr) + L-tyrosine + ATP = L-tyrosyl-tRNA(Tyr) + AMP + diphosphate + H(+). Its function is as follows. Catalyzes the attachment of tyrosine to tRNA(Tyr) in a two-step reaction: tyrosine is first activated by ATP to form Tyr-AMP and then transferred to the acceptor end of tRNA(Tyr). This chain is Tyrosine--tRNA ligase, found in Burkholderia thailandensis (strain ATCC 700388 / DSM 13276 / CCUG 48851 / CIP 106301 / E264).